A 268-amino-acid chain; its full sequence is tRNA pseudouridine synthase A (268 aa).

Catalysis depends on Asp-52, which acts as the Nucleophile. Tyr-110 provides a ligand contact to substrate.

Belongs to the tRNA pseudouridine synthase TruA family. As to quaternary structure, homodimer.

It carries out the reaction uridine(38/39/40) in tRNA = pseudouridine(38/39/40) in tRNA. Functionally, formation of pseudouridine at positions 38, 39 and 40 in the anticodon stem and loop of transfer RNAs. The chain is tRNA pseudouridine synthase A from Prochlorococcus marinus (strain MIT 9312).